The chain runs to 211 residues: MTRIADLRRDYRRQRLLESDAAEDPIEQFRLWLTDAVNAELPEPNAMTLATVGLDGMPAARLVLLKEVDDRGFVFFTNYRSRKGRELAAHPKAALVFWWAELERQVRIEGNVEQISAAESDAYFQSRPLGSRWGAWASQQSEVLASYAELEARLAAVEAHYGENVPRPEHWGGYRVLPTLIEFWQGRPNRLHDRLCYRRQGDHWQRVRLYP.

Substrate-binding positions include 8 to 11 and Lys-66; that span reads RRDY. FMN contacts are provided by residues 61 to 66, 76 to 77, Arg-82, Lys-83, and Gln-105; these read RLVLLK and FT. Positions 123, 127, and 131 each coordinate substrate. Residues 140–141 and Trp-184 each bind FMN; that span reads QS. 190–192 contacts substrate; that stretch reads RLH. FMN is bound at residue Arg-194.

This sequence belongs to the pyridoxamine 5'-phosphate oxidase family. Homodimer. The cofactor is FMN.

It carries out the reaction pyridoxamine 5'-phosphate + O2 + H2O = pyridoxal 5'-phosphate + H2O2 + NH4(+). The enzyme catalyses pyridoxine 5'-phosphate + O2 = pyridoxal 5'-phosphate + H2O2. It functions in the pathway cofactor metabolism; pyridoxal 5'-phosphate salvage; pyridoxal 5'-phosphate from pyridoxamine 5'-phosphate: step 1/1. The protein operates within cofactor metabolism; pyridoxal 5'-phosphate salvage; pyridoxal 5'-phosphate from pyridoxine 5'-phosphate: step 1/1. Catalyzes the oxidation of either pyridoxine 5'-phosphate (PNP) or pyridoxamine 5'-phosphate (PMP) into pyridoxal 5'-phosphate (PLP). This is Pyridoxine/pyridoxamine 5'-phosphate oxidase from Thermosynechococcus vestitus (strain NIES-2133 / IAM M-273 / BP-1).